The following is a 791-amino-acid chain: FHF complex subunit HOOK-interacting protein 1B (791 aa).

Disordered stretches follow at residues 465 to 510 and 524 to 556; these read APSP…VPRP and SLGGSESPGPAPRSPGLTASPTSSPGRRPSPAE. A Phosphoserine modification is found at Ser467. Over residues 496–510 the composition is skewed to low complexity; that stretch reads SPSVDSSSVVTVPRP. Ser524, Ser537, Ser543, Ser547, and Ser679 each carry phosphoserine. The segment covering 541–552 has biased composition (low complexity); it reads TASPTSSPGRRP. Phosphothreonine is present on Thr708. Ser716 is subject to Phosphoserine.

The protein belongs to the FHIP family. In terms of assembly, component of the FTS/Hook/FHIP complex (FHF complex), composed of AKTIP/FTS, FHIP1B, and one or more members of the Hook family of proteins HOOK1, HOOK2, and HOOK3. The FHF complex associates with the homotypic vesicular sorting complex (the HOPS complex).

Functionally, component of the FTS/Hook/FHIP complex (FHF complex). The FHF complex may function to promote vesicle trafficking and/or fusion via the homotypic vesicular protein sorting complex (the HOPS complex). FHF complex promotes the distribution of AP-4 complex to the perinuclear area of the cell. The sequence is that of FHF complex subunit HOOK-interacting protein 1B (Fhip1b) from Rattus norvegicus (Rat).